Here is a 736-residue protein sequence, read N- to C-terminus: Replication restart protein PriA (736 aa).

The region spanning 230-396 is the Helicase ATP-binding domain; sequence DFKGNISKEN…KEGRIRTFNF (167 aa). ATP is bound at residue 243–250; it reads GPTGSGKT. A DEAH box motif is present at residues 339 to 342; the sequence is DEEH. Residues Cys452, Cys455, Cys461, Cys464, Cys479, Cys482, Cys492, and Cys495 each coordinate Zn(2+). A Helicase C-terminal domain is found at 487–643; that stretch reads GLVESCPRCG…EELERRKALG (157 aa).

It belongs to the helicase family. PriA subfamily. As to quaternary structure, component of the replication restart primosome. Zn(2+) is required as a cofactor.

The enzyme catalyses Couples ATP hydrolysis with the unwinding of duplex DNA by translocating in the 3'-5' direction.. The catalysed reaction is ATP + H2O = ADP + phosphate + H(+). Its function is as follows. Initiates the restart of stalled replication forks, which reloads the replicative helicase on sites other than the origin of replication. Recognizes and binds to abandoned replication forks and remodels them to uncover a helicase loading site. Promotes assembly of the primosome at these replication forks. The polypeptide is Replication restart protein PriA (Thermotoga maritima (strain ATCC 43589 / DSM 3109 / JCM 10099 / NBRC 100826 / MSB8)).